We begin with the raw amino-acid sequence, 63 residues long: uncharacterized protein (63 aa).

This is an uncharacterized protein from Archaeoglobus fulgidus (strain ATCC 49558 / DSM 4304 / JCM 9628 / NBRC 100126 / VC-16).